A 312-amino-acid chain; its full sequence is MRLANQTLGGDFFLLGIFSQISHPGRLCLLIFSIFLMAVSWNITLILLIHIDSSLHTPMYFFINQLSLIDLTYISVTVPKMLVNQLAKDKTISVLGCGTQMYFYLQLGGAECCLLAAMAYDRYVAICHPLRYSVLMSHRVCLLLASGCWFVGSVDGFMLTPIAMSFPFCRSHEIQHFFCEVPAVLKLSCSDTSLYKIFMYLCCVIMLLIPVTVISVSYYYIILTIHKMNSVEGRKKAFTTCSSHITVVSLFYGAAIYNYMLPSSYQTPEKDMMSSFFYTILTPVLNPIIYSFRNKDVTRALKKMLSVQKPPY.

Residues 1–25 lie on the Extracellular side of the membrane; it reads MRLANQTLGGDFFLLGIFSQISHPG. Asn-5 is a glycosylation site (N-linked (GlcNAc...) asparagine). Residues 26-49 traverse the membrane as a helical segment; that stretch reads RLCLLIFSIFLMAVSWNITLILLI. At 50–57 the chain is on the cytoplasmic side; sequence HIDSSLHT. The helical transmembrane segment at 58–79 threads the bilayer; that stretch reads PMYFFINQLSLIDLTYISVTVP. The Extracellular portion of the chain corresponds to 80–100; the sequence is KMLVNQLAKDKTISVLGCGTQ. A disulfide bridge connects residues Cys-97 and Cys-189. Residues 101-120 form a helical membrane-spanning segment; the sequence is MYFYLQLGGAECCLLAAMAY. Topologically, residues 121 to 139 are cytoplasmic; sequence DRYVAICHPLRYSVLMSHR. A helical membrane pass occupies residues 140 to 158; it reads VCLLLASGCWFVGSVDGFM. Over 159-195 the chain is Extracellular; that stretch reads LTPIAMSFPFCRSHEIQHFFCEVPAVLKLSCSDTSLY. A helical membrane pass occupies residues 196–219; the sequence is KIFMYLCCVIMLLIPVTVISVSYY. Residues 220-236 are Cytoplasmic-facing; that stretch reads YIILTIHKMNSVEGRKK. A helical transmembrane segment spans residues 237-259; the sequence is AFTTCSSHITVVSLFYGAAIYNY. Residues 260-272 lie on the Extracellular side of the membrane; it reads MLPSSYQTPEKDM. The chain crosses the membrane as a helical span at residues 273–292; sequence MSSFFYTILTPVLNPIIYSF. Over 293–312 the chain is Cytoplasmic; that stretch reads RNKDVTRALKKMLSVQKPPY.

This sequence belongs to the G-protein coupled receptor 1 family.

It is found in the cell membrane. Its function is as follows. Odorant receptor. The protein is Olfactory receptor 2T10 (OR2T10) of Homo sapiens (Human).